Reading from the N-terminus, the 1313-residue chain is MSGWRYLICVSFLLTILLELTYQGPPVPASSSTKLLMTSYSMRSTVVSRYAHTLVTSVLFNPHAEAHEAIFDLDLPHLAFISNFTMTINNKVYIAEVKEKHQAKKIYEEAHQQGKTAAHVGIRDRESEKFRISTSLAAGTEVTFSLAYEELLQRHQGQYQLVVSLRPGQLVKRLSIEVTVSERTGISYVHIPPLRTGRLRTNAHASEVDSPPSTRIERGETCVRITYCPTLQDQSSISGSGIMADFLVQYDVVMEDIIGDVQIYDDYFIHYFAPRGLPPMEKNVVFVIDVSSSMFGTKMEQTKTAMNVILSDLQANDYFNIISFSDTVNVWKAGGSIQATIQNVHSAKDYLHCMEADGWTDVNSALLAAASVLNHSNQEPGRGPSVGRIPLIIFLTDGEPTAGVTTPSVILSNVRQALGHRVSLFSLAFGDDADFTLLRRLSLENRGIARRIYEDTDAALQLKGLYEEISMPLLADVRLNYLGGLVGASPWAVFPNYFGGSELVVAGQVQPGKQELGIHLAARGPKDQLLVAHHSEGATNNSQKAFGCPGEPAPNVAHFIRRLWAYVTIGELLDAHFQARDTTTRHLLAAKVLNLSLEYNFVTPLTSLVMVQPKQASEETRRQTSTSAGPDTIMPSSSSRHGLGVSTAQPALVPKVISPKSRPVKPKFYLSSTTTASTKKMLSSKELEPLGESPHTLSMPTYPKAKIPAQQDSGTLAQPTLRTKPTILVPSNSGTLLPLKPGSLSHQNPDILPTNSRTQVPPVKPGIPASPKADTVKCVTPLHSKPGAPSHPQLGALTSQAPKGLPQSRPGVSTLQVPKYPLHTRPRVPAPKTRNNMPHLGPGILLSKTPKILLSLKPSAPPHQISTSISLSKPETPNPHMPQTPLPPRPDRPRPPLPESLSTFPNTISSSTGPSSTTTTSVLGEPLPMPFTPTLPPGRFWHQYDLLPGPQRTRQVLGPSRPGVPTMSLLNSSRPTPEGSPPNLPILLPSSILPEAISLLLLPEELELLSESMVESKFVESLNPPAFYTFLTPDEDGSPNWDGNSEEILGGAGGSMESQGSSVGLAKGTLPSIFTFSSSVDGDPHFVIQIPHSEEKICFTLNGHPGDLLQLIEDPKAGLHVSGKLLGAPPRPGHKDQTRTYFQIITVTTDKPRAYTITISRSSISLRGEGTLRLSWDQPALLKRPQLELYVAAAARLTLRLGPYLEFLVLRHRYRHPSTLQLPHLGFYVANGSGLSPSARGLIGQFQHADIRLVTGPMGPCLRRHHGPDVPVILGKRLLKDSPRLLPRWASCWLVKRSHVELLLGHPYLSYVL.

The N-terminal stretch at 1-23 (MSGWRYLICVSFLLTILLELTYQ) is a signal peptide. Residues 24-150 (GPPVPASSST…EVTFSLAYEE (127 aa)) enclose the VIT domain. N-linked (GlcNAc...) asparagine glycosylation is found at N83, N374, N540, and N594. The VWFA domain occupies 283 to 469 (NVVFVIDVSS…LQLKGLYEEI (187 aa)). Disordered regions lie at residues 612–644 (QPKQASEETRRQTSTSAGPDTIMPSSSSRHGLG), 783–817 (HSKPGAPSHPQLGALTSQAPKGLPQSRPGVSTLQV), 856–928 (LKPS…EPLP), and 959–983 (PSRPGVPTMSLLNSSRPTPEGSPPN). Positions 623 to 640 (QTSTSAGPDTIMPSSSSR) are enriched in polar residues. Residues 864–875 (QISTSISLSKPE) are compositionally biased toward polar residues. The segment covering 876 to 888 (TPNPHMPQTPLPP) has biased composition (pro residues). A compositionally biased stretch (low complexity) spans 907 to 921 (TISSSTGPSSTTTTS). N971 and N1231 each carry an N-linked (GlcNAc...) asparagine glycan.

It belongs to the ITIH family.

It localises to the secreted. The protein is Inter-alpha-trypsin inhibitor heavy chain H6 (ITIH6) of Homo sapiens (Human).